A 102-amino-acid polypeptide reads, in one-letter code: NADH-quinone oxidoreductase subunit K (102 aa).

Helical transmembrane passes span 5–25 (LGHFLSLGAMLFALSVIGIFL), 31–51 (IVLLMAIELMLLAVNMNFVAF), and 62–82 (IFVFFILTVAAAESAIGLALL).

It belongs to the complex I subunit 4L family. NDH-1 is composed of 14 different subunits. Subunits NuoA, H, J, K, L, M, N constitute the membrane sector of the complex.

It localises to the cell inner membrane. It carries out the reaction a quinone + NADH + 5 H(+)(in) = a quinol + NAD(+) + 4 H(+)(out). NDH-1 shuttles electrons from NADH, via FMN and iron-sulfur (Fe-S) centers, to quinones in the respiratory chain. The immediate electron acceptor for the enzyme in this species is believed to be ubiquinone. Couples the redox reaction to proton translocation (for every two electrons transferred, four hydrogen ions are translocated across the cytoplasmic membrane), and thus conserves the redox energy in a proton gradient. The chain is NADH-quinone oxidoreductase subunit K from Variovorax paradoxus (strain S110).